The sequence spans 470 residues: MDYFPIFCQLQHKACLLVGGGEIAERKARLLLDAGALVTVNACEFTPQFHHWADQGQLSLISGEFVPELLADKWLVIAATDQLSVNALVYQSANQQRIFCNVVDDPKRTSFIMPSIIDRSPIMIAVSSGGKAPVLARLLREKLEALLPQHLGQLAGNLRQRVKQHFTVMTERRRFWEKLLTHDRLAQSLANNDHVQADQHVEQLFSAPLTDRGEVVLVGAGPGDAGLLTLKGLQQIQQADVVVYDRLVSDEVMNLVRRDAERIFVGKQSGHHCVPQEQINQILLQQAQSGKRVVRLKGGDPFIFGRGGEELEELAGYGIPFSVVPGITAASGCSAYSGIPLTHRDHAQSVRLVTGHAKKEGQLDWANLAAEKQTLVFYMGLSQAGEIQQQLIQHGMPATTQVALVENGTSRHQRVVSGELSQLALLSQQVSSPSLIIVGSVVSLREKLNWFSSRHHDDQPKVTECVAHVG.

Positions 1–201 are precorrin-2 dehydrogenase /sirohydrochlorin ferrochelatase; that stretch reads MDYFPIFCQL…NDHVQADQHV (201 aa). Residues 22–23 and 43–44 contribute to the NAD(+) site; these read EI and CE. Serine 128 carries the phosphoserine modification. Residues 213-470 are uroporphyrinogen-III C-methyltransferase; sequence GEVVLVGAGP…KVTECVAHVG (258 aa). Proline 222 contacts S-adenosyl-L-methionine. Aspartate 245 acts as the Proton acceptor in catalysis. Lysine 267 acts as the Proton donor in catalysis. Residues 298–300, isoleucine 303, 328–329, methionine 379, and glycine 408 contribute to the S-adenosyl-L-methionine site; these read GGD and TA.

This sequence in the N-terminal section; belongs to the precorrin-2 dehydrogenase / sirohydrochlorin ferrochelatase family. The protein in the C-terminal section; belongs to the precorrin methyltransferase family.

It carries out the reaction uroporphyrinogen III + 2 S-adenosyl-L-methionine = precorrin-2 + 2 S-adenosyl-L-homocysteine + H(+). The catalysed reaction is precorrin-2 + NAD(+) = sirohydrochlorin + NADH + 2 H(+). It catalyses the reaction siroheme + 2 H(+) = sirohydrochlorin + Fe(2+). The protein operates within cofactor biosynthesis; adenosylcobalamin biosynthesis; precorrin-2 from uroporphyrinogen III: step 1/1. It participates in cofactor biosynthesis; adenosylcobalamin biosynthesis; sirohydrochlorin from precorrin-2: step 1/1. It functions in the pathway porphyrin-containing compound metabolism; siroheme biosynthesis; precorrin-2 from uroporphyrinogen III: step 1/1. Its pathway is porphyrin-containing compound metabolism; siroheme biosynthesis; siroheme from sirohydrochlorin: step 1/1. The protein operates within porphyrin-containing compound metabolism; siroheme biosynthesis; sirohydrochlorin from precorrin-2: step 1/1. In terms of biological role, multifunctional enzyme that catalyzes the SAM-dependent methylations of uroporphyrinogen III at position C-2 and C-7 to form precorrin-2 via precorrin-1. Then it catalyzes the NAD-dependent ring dehydrogenation of precorrin-2 to yield sirohydrochlorin. Finally, it catalyzes the ferrochelation of sirohydrochlorin to yield siroheme. The sequence is that of Siroheme synthase from Yersinia pestis.